Here is a 217-residue protein sequence, read N- to C-terminus: 3,4-dihydroxy-2-butanone 4-phosphate synthase (217 aa).

Residues 37-38 (RE), D42, 150-154 (RGGHT), and E174 contribute to the D-ribulose 5-phosphate site. A Mg(2+)-binding site is contributed by E38. H153 contacts Mg(2+).

This sequence belongs to the DHBP synthase family. Homodimer. Requires Mg(2+) as cofactor. The cofactor is Mn(2+).

The catalysed reaction is D-ribulose 5-phosphate = (2S)-2-hydroxy-3-oxobutyl phosphate + formate + H(+). It functions in the pathway cofactor biosynthesis; riboflavin biosynthesis; 2-hydroxy-3-oxobutyl phosphate from D-ribulose 5-phosphate: step 1/1. Its function is as follows. Catalyzes the conversion of D-ribulose 5-phosphate to formate and 3,4-dihydroxy-2-butanone 4-phosphate. The chain is 3,4-dihydroxy-2-butanone 4-phosphate synthase from Escherichia coli O17:K52:H18 (strain UMN026 / ExPEC).